A 457-amino-acid chain; its full sequence is Serine--tRNA ligase (457 aa).

L-serine is bound at residue 252 to 254; sequence TAE. Residues 283-285 and Val299 each bind ATP; that span reads RKE. An L-serine-binding site is contributed by Glu306. 370-373 provides a ligand contact to ATP; that stretch reads EMVS. Thr406 is a binding site for L-serine.

It belongs to the class-II aminoacyl-tRNA synthetase family. Type-1 seryl-tRNA synthetase subfamily. In terms of assembly, homodimer. The tRNA molecule binds across the dimer.

It is found in the cytoplasm. It carries out the reaction tRNA(Ser) + L-serine + ATP = L-seryl-tRNA(Ser) + AMP + diphosphate + H(+). The catalysed reaction is tRNA(Sec) + L-serine + ATP = L-seryl-tRNA(Sec) + AMP + diphosphate + H(+). The protein operates within aminoacyl-tRNA biosynthesis; selenocysteinyl-tRNA(Sec) biosynthesis; L-seryl-tRNA(Sec) from L-serine and tRNA(Sec): step 1/1. Functionally, catalyzes the attachment of serine to tRNA(Ser). Is also able to aminoacylate tRNA(Sec) with serine, to form the misacylated tRNA L-seryl-tRNA(Sec), which will be further converted into selenocysteinyl-tRNA(Sec). The polypeptide is Serine--tRNA ligase (Saccharolobus islandicus (strain Y.G.57.14 / Yellowstone #1) (Sulfolobus islandicus)).